A 197-amino-acid polypeptide reads, in one-letter code: Large ribosomal subunit protein bL17 (197 aa).

Residues 120-197 (DVPPADTGQG…EEEESEEDNT (78 aa)) form a disordered region. A compositionally biased stretch (gly residues) spans 127 to 136 (GQGGSGGTRR). Over residues 159–197 (SSDEESESVEEDEATAEEASADAEQGEAEEEEESEEDNT) the composition is skewed to acidic residues.

This sequence belongs to the bacterial ribosomal protein bL17 family. In terms of assembly, part of the 50S ribosomal subunit. Contacts protein L32.

In Salinibacter ruber (strain DSM 13855 / M31), this protein is Large ribosomal subunit protein bL17.